A 78-amino-acid polypeptide reads, in one-letter code: Acyl carrier protein (78 aa).

Residues 2–77 enclose the Carrier domain; it reads STIEERVKKI…AAIDYVNAHQ (76 aa). The residue at position 37 (Ser37) is an O-(pantetheine 4'-phosphoryl)serine.

Belongs to the acyl carrier protein (ACP) family. 4'-phosphopantetheine is transferred from CoA to a specific serine of apo-ACP by AcpS. This modification is essential for activity because fatty acids are bound in thioester linkage to the sulfhydryl of the prosthetic group.

It localises to the cytoplasm. The protein operates within lipid metabolism; fatty acid biosynthesis. Functionally, carrier of the growing fatty acid chain in fatty acid biosynthesis. The sequence is that of Acyl carrier protein from Pseudomonas entomophila (strain L48).